Here is a 633-residue protein sequence, read N- to C-terminus: Threonine--tRNA ligase (633 aa).

In terms of domain architecture, TGS spans 1 to 61; the sequence is MINIHFSNNL…IENCTFEVIT (61 aa). A catalytic region spans residues 242-533; it reads DHRKIGRELE…LIEHHSGKFP (292 aa). Zn(2+) is bound by residues C333, H384, and H510.

The protein belongs to the class-II aminoacyl-tRNA synthetase family. Homodimer. Zn(2+) serves as cofactor.

It is found in the cytoplasm. It catalyses the reaction tRNA(Thr) + L-threonine + ATP = L-threonyl-tRNA(Thr) + AMP + diphosphate + H(+). Catalyzes the attachment of threonine to tRNA(Thr) in a two-step reaction: L-threonine is first activated by ATP to form Thr-AMP and then transferred to the acceptor end of tRNA(Thr). Also edits incorrectly charged L-seryl-tRNA(Thr). This chain is Threonine--tRNA ligase, found in Ehrlichia chaffeensis (strain ATCC CRL-10679 / Arkansas).